A 379-amino-acid chain; its full sequence is Carbamoyl phosphate synthase small chain (379 aa).

The CPSase stretch occupies residues 1–187 (MNFTPALLAL…GSGHAPAPAS (187 aa)). L-glutamine-binding residues include Ser-48, Gly-239, and Gly-241. Residues 191-378 (KVVAYDFGVK…IELMKPQGVR (188 aa)) enclose the Glutamine amidotransferase type-1 domain. The active-site Nucleophile is Cys-267. Residues Leu-268, Gln-271, Asn-309, Gly-311, and Phe-312 each coordinate L-glutamine. Active-site residues include His-351 and Glu-353.

It belongs to the CarA family. Composed of two chains; the small (or glutamine) chain promotes the hydrolysis of glutamine to ammonia, which is used by the large (or ammonia) chain to synthesize carbamoyl phosphate. Tetramer of heterodimers (alpha,beta)4.

It catalyses the reaction hydrogencarbonate + L-glutamine + 2 ATP + H2O = carbamoyl phosphate + L-glutamate + 2 ADP + phosphate + 2 H(+). The catalysed reaction is L-glutamine + H2O = L-glutamate + NH4(+). The protein operates within amino-acid biosynthesis; L-arginine biosynthesis; carbamoyl phosphate from bicarbonate: step 1/1. It participates in pyrimidine metabolism; UMP biosynthesis via de novo pathway; (S)-dihydroorotate from bicarbonate: step 1/3. Small subunit of the glutamine-dependent carbamoyl phosphate synthetase (CPSase). CPSase catalyzes the formation of carbamoyl phosphate from the ammonia moiety of glutamine, carbonate, and phosphate donated by ATP, constituting the first step of 2 biosynthetic pathways, one leading to arginine and/or urea and the other to pyrimidine nucleotides. The small subunit (glutamine amidotransferase) binds and cleaves glutamine to supply the large subunit with the substrate ammonia. The sequence is that of Carbamoyl phosphate synthase small chain from Thioalkalivibrio sulfidiphilus (strain HL-EbGR7).